The primary structure comprises 473 residues: UDP-N-acetylmuramate--L-alanine ligase (473 aa).

Residue 123 to 129 (GTHGKTT) coordinates ATP.

It belongs to the MurCDEF family.

Its subcellular location is the cytoplasm. It carries out the reaction UDP-N-acetyl-alpha-D-muramate + L-alanine + ATP = UDP-N-acetyl-alpha-D-muramoyl-L-alanine + ADP + phosphate + H(+). It functions in the pathway cell wall biogenesis; peptidoglycan biosynthesis. Functionally, cell wall formation. This is UDP-N-acetylmuramate--L-alanine ligase from Marinomonas sp. (strain MWYL1).